The chain runs to 569 residues: Synaptotagmin-4 (569 aa).

Residues 1 to 21 form a helical membrane-spanning segment; sequence MGFLFGLFIGIAVSFGLVVAF. The SMP-LTD domain occupies 67–251; it reads QRQKLNWLNL…WPVRKIIPIL (185 aa). Residues 229-531 form a phospholipid binding region; it reads EETIRDAIED…KIGRVIMTLT (303 aa). C2 domains follow at residues 245–366 and 426–543; these read RKII…DIWL and TDMK…QEWF. Ca(2+) contacts are provided by Asp-459, Asp-465, Asp-514, Asp-516, and Asp-521.

This sequence belongs to the synaptotagmin family. It depends on Ca(2+) as a cofactor.

The protein resides in the membrane. In terms of biological role, may be involved in membrane trafficking. This chain is Synaptotagmin-4 (SYT4), found in Arabidopsis thaliana (Mouse-ear cress).